Reading from the N-terminus, the 87-residue chain is U3-theraphotoxin-Hhn1j (87 aa).

The signal sequence occupies residues 1–24; it reads MVNMKASMFLTFAGLVLLFVVCYA. The propeptide occupies 25-52; that stretch reads SESEEKEFPKEMLSSIFAVDNDFKQEER. Cystine bridges form between cysteine 54–cysteine 67, cysteine 61–cysteine 72, and cysteine 66–cysteine 79.

It belongs to the neurotoxin 10 (Hwtx-1) family. 51 (Hntx-8) subfamily. Hntx-8 sub-subfamily. As to expression, expressed by the venom gland.

The protein resides in the secreted. In terms of biological role, ion channel inhibitor. The protein is U3-theraphotoxin-Hhn1j of Cyriopagopus hainanus (Chinese bird spider).